Consider the following 72-residue polypeptide: SRY-related protein MG44 (72 aa).

Residues 1–69 (VKRPMNAFMV…KHMADYPNYK (69 aa)) constitute a DNA-binding region (HMG box).

It localises to the nucleus. In Tarentola mauritanica (Common wall gecko), this protein is SRY-related protein MG44.